The primary structure comprises 219 residues: MKHILKTVDHTILKATTTWEDIKILCDEAVDMSVASVCIPPSYVKRASEYLKGKIKICTVIGFPLGYQTTATKVFEAKDAIENGADEVDMVVNISDIKNKDYDNIGKEIKEIKKAIGDKVLKVIIETCYLDEDEKIKMCEIVTMSGSDFIKTSTGMGTGGATLEDIKLMKEHVGKNVKIKAAGGVKSISDAEKFIEAGAERLGTSSICKILKNEDTTDY.

The Proton donor/acceptor role is filled by Asp89. The Schiff-base intermediate with acetaldehyde role is filled by Lys151. Lys180 functions as the Proton donor/acceptor in the catalytic mechanism.

It belongs to the DeoC/FbaB aldolase family. DeoC type 1 subfamily.

The protein localises to the cytoplasm. The enzyme catalyses 2-deoxy-D-ribose 5-phosphate = D-glyceraldehyde 3-phosphate + acetaldehyde. It participates in carbohydrate degradation; 2-deoxy-D-ribose 1-phosphate degradation; D-glyceraldehyde 3-phosphate and acetaldehyde from 2-deoxy-alpha-D-ribose 1-phosphate: step 2/2. Catalyzes a reversible aldol reaction between acetaldehyde and D-glyceraldehyde 3-phosphate to generate 2-deoxy-D-ribose 5-phosphate. This is Deoxyribose-phosphate aldolase from Clostridioides difficile (strain 630) (Peptoclostridium difficile).